We begin with the raw amino-acid sequence, 311 residues long: MDILLANPRGFCAGVDRAISIVESALEKFGAPIYVRHEVVHNRYVVNKLKEAGAVFVEELDEVPDDSIVIFSAHGVAKTVREMAKSRALKVFDATCPLVTKVHMEVHRASRKGSEAVLIGHAGHPEVIGTMGQYENREGGMYLVETPDDVARLKVKNPDDLCFVTQTTLSVDETSDVIDALRKQFPKIQGPRKDDICYATQNRQDAVREMAGLVDVMLVVGSRNSSNSNRLRELAEKVGSKAYLIDDASMIETVWLEGVKAIGVTAGASAPDVLVQNVIARLRELGGNMVVEHPGREENVVFEVPPELRII.

Residue Cys-12 participates in [4Fe-4S] cluster binding. (2E)-4-hydroxy-3-methylbut-2-enyl diphosphate-binding residues include His-41 and His-74. Dimethylallyl diphosphate is bound by residues His-41 and His-74. The isopentenyl diphosphate site is built by His-41 and His-74. Position 96 (Cys-96) interacts with [4Fe-4S] cluster. Residue His-124 coordinates (2E)-4-hydroxy-3-methylbut-2-enyl diphosphate. His-124 lines the dimethylallyl diphosphate pocket. His-124 provides a ligand contact to isopentenyl diphosphate. Glu-126 serves as the catalytic Proton donor. Thr-167 lines the (2E)-4-hydroxy-3-methylbut-2-enyl diphosphate pocket. Cys-197 is a [4Fe-4S] cluster binding site. Residues Ser-225, Ser-226, Asn-227, and Ser-269 each contribute to the (2E)-4-hydroxy-3-methylbut-2-enyl diphosphate site. 4 residues coordinate dimethylallyl diphosphate: Ser-225, Ser-226, Asn-227, and Ser-269. Ser-225, Ser-226, Asn-227, and Ser-269 together coordinate isopentenyl diphosphate.

This sequence belongs to the IspH family. Requires [4Fe-4S] cluster as cofactor.

The enzyme catalyses isopentenyl diphosphate + 2 oxidized [2Fe-2S]-[ferredoxin] + H2O = (2E)-4-hydroxy-3-methylbut-2-enyl diphosphate + 2 reduced [2Fe-2S]-[ferredoxin] + 2 H(+). The catalysed reaction is dimethylallyl diphosphate + 2 oxidized [2Fe-2S]-[ferredoxin] + H2O = (2E)-4-hydroxy-3-methylbut-2-enyl diphosphate + 2 reduced [2Fe-2S]-[ferredoxin] + 2 H(+). It participates in isoprenoid biosynthesis; dimethylallyl diphosphate biosynthesis; dimethylallyl diphosphate from (2E)-4-hydroxy-3-methylbutenyl diphosphate: step 1/1. Its pathway is isoprenoid biosynthesis; isopentenyl diphosphate biosynthesis via DXP pathway; isopentenyl diphosphate from 1-deoxy-D-xylulose 5-phosphate: step 6/6. Catalyzes the conversion of 1-hydroxy-2-methyl-2-(E)-butenyl 4-diphosphate (HMBPP) into a mixture of isopentenyl diphosphate (IPP) and dimethylallyl diphosphate (DMAPP). Acts in the terminal step of the DOXP/MEP pathway for isoprenoid precursor biosynthesis. This is 4-hydroxy-3-methylbut-2-enyl diphosphate reductase from Aeromonas salmonicida (strain A449).